We begin with the raw amino-acid sequence, 155 residues long: MAKKNTENNTLADNRKAWHDYFIEETYECGVELVGTEVKSIKNGKANLKDSYAEIRNGEVFACNMHVSPYKEGNIFNVDPLRKRRLLLHKSEIDKLLGFTSQKGYTLVPIALYLKNRRVKVKLAVAVGKKNYDKRDALKEKDARREIDRAMKNNR.

The protein belongs to the SmpB family.

The protein localises to the cytoplasm. Required for rescue of stalled ribosomes mediated by trans-translation. Binds to transfer-messenger RNA (tmRNA), required for stable association of tmRNA with ribosomes. tmRNA and SmpB together mimic tRNA shape, replacing the anticodon stem-loop with SmpB. tmRNA is encoded by the ssrA gene; the 2 termini fold to resemble tRNA(Ala) and it encodes a 'tag peptide', a short internal open reading frame. During trans-translation Ala-aminoacylated tmRNA acts like a tRNA, entering the A-site of stalled ribosomes, displacing the stalled mRNA. The ribosome then switches to translate the ORF on the tmRNA; the nascent peptide is terminated with the 'tag peptide' encoded by the tmRNA and targeted for degradation. The ribosome is freed to recommence translation, which seems to be the essential function of trans-translation. The protein is SsrA-binding protein of Clostridium acetobutylicum (strain ATCC 824 / DSM 792 / JCM 1419 / IAM 19013 / LMG 5710 / NBRC 13948 / NRRL B-527 / VKM B-1787 / 2291 / W).